Reading from the N-terminus, the 78-residue chain is Large ribosomal subunit protein bL28 (78 aa).

A disordered region spans residues 1–20 (MSRVCQVTGKGPVTGNNISH).

The protein belongs to the bacterial ribosomal protein bL28 family.

This Stutzerimonas stutzeri (strain A1501) (Pseudomonas stutzeri) protein is Large ribosomal subunit protein bL28.